The chain runs to 419 residues: F-box/FBD/LRR-repeat protein At4g26340 (419 aa).

The F-box domain occupies 1 to 53; sequence MDRISQLSDDLLLQILSFIPGKDVVATSLLSKRWQSLWMLVSELEYDDSYHTG. 7 LRR repeats span residues 55–81, 132–159, 160–185, 187–208, 226–253, 254–284, and 299–324; these read YKSFSQFVYRSLLSNNAPVIKHLHLNL, TLRLINFVLLDVPSSVCLPSLKVLHLKT, VDYEDDASLPSLLFGCPNLEELFVER, DQDLEMDVTFVVPSLRRLSMID, YLNITDDAVYDVRQIENMPELVEAHVDI, TQGVTHKFLRALTSVRQLSLCLSLSEVMCPS, and VVKGWWDLLTSMLQDSPKLQSLKLID. Residues 339 to 389 form the FBD domain; it reads GWKLPSSVPECLLFSLEAFEWIGYKGRRGDREVATYVLKNAACLRTAKFSP.

The protein is F-box/FBD/LRR-repeat protein At4g26340 of Arabidopsis thaliana (Mouse-ear cress).